A 616-amino-acid chain; its full sequence is Vitamin B12 transporter BtuB (616 aa).

Positions 1 to 20 (MIKKISLLTALSVTAFSGWA) are cleaved as a signal peptide. The short motif at 26 to 33 (DSLVVTAN) is the TonB box element. In terms of domain architecture, TBDR plug spans 38–152 (PVNTVLAPTS…IGGVVNIITT (115 aa)). Cyanocob(III)alamin is bound by residues leucine 83, serine 85, asparagine 92, and 110-111 (VT). One can recognise a TBDR beta-barrel domain in the interval 155-616 (KDGTTLNAGI…EYTLSGSYTF (462 aa)). Beta stranded transmembrane passes span 158 to 165 (TTLNAGIG), 169 to 178 (YQNYGGSTQQ), and 184 to 195 (TRVTLAGDYTYT). Aspartate 199, glutamine 211, aspartate 213, and aspartate 215 together coordinate Ca(2+). The next 2 beta stranded transmembrane spans lie at 217 to 227 (FMNKTLYGALE) and 232 to 248 (DQWT…NRTA). Residues tyrosine 249, aspartate 250, and aspartate 263 each contribute to the Ca(2+) site. The next 17 beta stranded transmembrane spans lie at 265 to 279 (RQLY…LRFN), 281 to 298 (DLFH…KDYN), 311 to 327 (TLDE…NAVD), 330 to 339 (HGNIGAGVDW), 355 to 371 (YDLR…QKFG), 373 to 383 (VTLEGAVRSDD), 387 to 402 (FGRH…WEFI), 405 to 419 (YRFI…KAPN), 436 to 445 (ESKQWEGAFE), 451 to 460 (VNWRVSAYRN), 475 to 492 (YYNV…TASF), 496 to 511 (PLTH…ARNA), 519 to 531 (RRAK…QLDT), 537 to 552 (DWSL…YDTD), 560 to 574 (NVKL…VAVS), 587 to 598 (IANLFDKDYETA), and 604 to 616 (AGRE…SYTF). Position 311 (threonine 311) interacts with cyanocob(III)alamin. Arginine 519 provides a ligand contact to cyanocob(III)alamin. The TonB C-terminal box signature appears at 599–616 (YGYATAGREYTLSGSYTF).

This sequence belongs to the TonB-dependent receptor family. BtuB (TC 1.B.14.3.1) subfamily.

The protein resides in the cell outer membrane. Involved in the active translocation of vitamin B12 (cyanocobalamin) across the outer membrane to the periplasmic space. It derives its energy for transport by interacting with the trans-periplasmic membrane protein TonB. This Cronobacter sakazakii (strain ATCC BAA-894) (Enterobacter sakazakii) protein is Vitamin B12 transporter BtuB.